The chain runs to 439 residues: Phthalate 4,5-dioxygenase oxygenase subunit (439 aa).

Residues 27 to 134 (WTPVCLLEEV…TREWGGFVWA (108 aa)) form the Rieske domain. Positions 70, 72, 89, and 92 each coordinate [2Fe-2S] cluster. Fe cation contacts are provided by His181 and His186.

It belongs to the bacterial ring-hydroxylating dioxygenase alpha subunit family. In terms of assembly, this dioxygenase system consists of two proteins: phthalate oxygenase and phthalate oxygenase reductase. [2Fe-2S] cluster is required as a cofactor. It depends on Fe cation as a cofactor.

The enzyme catalyses phthalate + NADH + O2 + H(+) = cis-4,5-dihydroxycyclohexa-2,6-diene-1,2-dicarboxylate + NAD(+). It participates in xenobiotic degradation; phthalate degradation; 3,4-dihydroxybenzoate from phthalate: step 1/3. In Pseudomonas putida (Arthrobacter siderocapsulatus), this protein is Phthalate 4,5-dioxygenase oxygenase subunit (pht3).